The primary structure comprises 218 residues: Ras-related protein RabO (218 aa).

G15 to T22 is a GTP binding site. The short motif at R37–F45 is the Effector region element. Residues D63 to Q67 and N122 to D125 each bind GTP. C215 is subject to Cysteine methyl ester. C215 carries the S-geranylgeranyl cysteine lipid modification. A propeptide spans F216–L218 (removed in mature form).

The protein belongs to the small GTPase superfamily. Rab family.

The protein localises to the cell membrane. The polypeptide is Ras-related protein RabO (rabO) (Dictyostelium discoideum (Social amoeba)).